Reading from the N-terminus, the 59-residue chain is Large ribosomal subunit protein bL32 (59 aa).

The segment covering 1 to 20 (MAVPKKKTSKGKRNQRHATW) has biased composition (basic residues). The interval 1–22 (MAVPKKKTSKGKRNQRHATWKG) is disordered.

Belongs to the bacterial ribosomal protein bL32 family.

This chain is Large ribosomal subunit protein bL32, found in Prochlorococcus marinus (strain NATL1A).